The chain runs to 335 residues: GTPase Obg (335 aa).

The Obg domain occupies 1–158 (MFVDQITLEL…RLVELELKLI (158 aa)). One can recognise an OBG-type G domain in the interval 159–334 (ADIGLVGFPN…LYDLFKSKLS (176 aa)). Residues 165–172 (GFPNAGKS), 190–194 (FTTLH), 215–218 (DIPG), 285–288 (NKID), and 315–317 (SGL) each bind GTP. The Mg(2+) site is built by Ser172 and Thr192.

Belongs to the TRAFAC class OBG-HflX-like GTPase superfamily. OBG GTPase family. Monomer. Mg(2+) is required as a cofactor.

Its subcellular location is the cytoplasm. In terms of biological role, an essential GTPase which binds GTP, GDP and possibly (p)ppGpp with moderate affinity, with high nucleotide exchange rates and a fairly low GTP hydrolysis rate. Plays a role in control of the cell cycle, stress response, ribosome biogenesis and in those bacteria that undergo differentiation, in morphogenesis control. This is GTPase Obg from Chlamydia trachomatis serovar A (strain ATCC VR-571B / DSM 19440 / HAR-13).